Consider the following 142-residue polypeptide: Large ribosomal subunit protein uL11 (142 aa).

Belongs to the universal ribosomal protein uL11 family. As to quaternary structure, part of the ribosomal stalk of the 50S ribosomal subunit. Interacts with L10 and the large rRNA to form the base of the stalk. L10 forms an elongated spine to which L12 dimers bind in a sequential fashion forming a multimeric L10(L12)X complex. Post-translationally, one or more lysine residues are methylated.

Its function is as follows. Forms part of the ribosomal stalk which helps the ribosome interact with GTP-bound translation factors. This is Large ribosomal subunit protein uL11 from Xylella fastidiosa (strain Temecula1 / ATCC 700964).